Reading from the N-terminus, the 296-residue chain is Ribosomal RNA small subunit methyltransferase H (296 aa).

Residues 41-43 (GGH), Asp60, Phe87, Asp103, and Gln110 each bind S-adenosyl-L-methionine.

Belongs to the methyltransferase superfamily. RsmH family.

It is found in the cytoplasm. The enzyme catalyses cytidine(1402) in 16S rRNA + S-adenosyl-L-methionine = N(4)-methylcytidine(1402) in 16S rRNA + S-adenosyl-L-homocysteine + H(+). Its function is as follows. Specifically methylates the N4 position of cytidine in position 1402 (C1402) of 16S rRNA. This is Ribosomal RNA small subunit methyltransferase H from Synechococcus elongatus (strain ATCC 33912 / PCC 7942 / FACHB-805) (Anacystis nidulans R2).